A 648-amino-acid polypeptide reads, in one-letter code: Phosphomethylpyrimidine synthase (648 aa).

Substrate-binding positions include Asn253, Met282, Tyr311, His347, 367-369 (SRG), 408-411 (DGLR), and Glu447. His451 provides a ligand contact to Zn(2+). Tyr474 contributes to the substrate binding site. Residue His515 participates in Zn(2+) binding. Residues Cys595, Cys598, and Cys603 each coordinate [4Fe-4S] cluster.

Belongs to the ThiC family. Homodimer. It depends on [4Fe-4S] cluster as a cofactor.

The enzyme catalyses 5-amino-1-(5-phospho-beta-D-ribosyl)imidazole + S-adenosyl-L-methionine = 4-amino-2-methyl-5-(phosphooxymethyl)pyrimidine + CO + 5'-deoxyadenosine + formate + L-methionine + 3 H(+). It participates in cofactor biosynthesis; thiamine diphosphate biosynthesis. Its function is as follows. Catalyzes the synthesis of the hydroxymethylpyrimidine phosphate (HMP-P) moiety of thiamine from aminoimidazole ribotide (AIR) in a radical S-adenosyl-L-methionine (SAM)-dependent reaction. The chain is Phosphomethylpyrimidine synthase from Burkholderia thailandensis (strain ATCC 700388 / DSM 13276 / CCUG 48851 / CIP 106301 / E264).